The chain runs to 150 residues: FAD synthase (150 aa).

ATP contacts are provided by residues 20-21 (TF), 25-28 (HPGH), and Asp-103.

This sequence belongs to the archaeal FAD synthase family. In terms of assembly, homodimer. The cofactor is a divalent metal cation.

The enzyme catalyses FMN + ATP + H(+) = FAD + diphosphate. It functions in the pathway cofactor biosynthesis; FAD biosynthesis; FAD from FMN: step 1/1. Functionally, catalyzes the transfer of the AMP portion of ATP to flavin mononucleotide (FMN) to produce flavin adenine dinucleotide (FAD) coenzyme. This is FAD synthase from Methanohalobium evestigatum (strain ATCC BAA-1072 / DSM 3721 / NBRC 107634 / OCM 161 / Z-7303).